Consider the following 557-residue polypeptide: Dihydroxy-acid dehydratase (557 aa).

Cysteine 50 contacts [2Fe-2S] cluster. Aspartate 82 contacts Mg(2+). Cysteine 123 lines the [2Fe-2S] cluster pocket. Aspartate 124 and lysine 125 together coordinate Mg(2+). Lysine 125 carries the post-translational modification N6-carboxylysine. Position 195 (cysteine 195) interacts with [2Fe-2S] cluster. Glutamate 447 is a Mg(2+) binding site. Serine 473 serves as the catalytic Proton acceptor.

It belongs to the IlvD/Edd family. In terms of assembly, homodimer. It depends on [2Fe-2S] cluster as a cofactor. Mg(2+) serves as cofactor.

The enzyme catalyses (2R)-2,3-dihydroxy-3-methylbutanoate = 3-methyl-2-oxobutanoate + H2O. It carries out the reaction (2R,3R)-2,3-dihydroxy-3-methylpentanoate = (S)-3-methyl-2-oxopentanoate + H2O. The protein operates within amino-acid biosynthesis; L-isoleucine biosynthesis; L-isoleucine from 2-oxobutanoate: step 3/4. It participates in amino-acid biosynthesis; L-valine biosynthesis; L-valine from pyruvate: step 3/4. In terms of biological role, functions in the biosynthesis of branched-chain amino acids. Catalyzes the dehydration of (2R,3R)-2,3-dihydroxy-3-methylpentanoate (2,3-dihydroxy-3-methylvalerate) into 2-oxo-3-methylpentanoate (2-oxo-3-methylvalerate) and of (2R)-2,3-dihydroxy-3-methylbutanoate (2,3-dihydroxyisovalerate) into 2-oxo-3-methylbutanoate (2-oxoisovalerate), the penultimate precursor to L-isoleucine and L-valine, respectively. The protein is Dihydroxy-acid dehydratase of Burkholderia mallei (strain NCTC 10247).